We begin with the raw amino-acid sequence, 387 residues long: Sulfate adenylyltransferase (387 aa).

It belongs to the sulfate adenylyltransferase family.

The enzyme catalyses sulfate + ATP + H(+) = adenosine 5'-phosphosulfate + diphosphate. The protein operates within sulfur metabolism; hydrogen sulfide biosynthesis; sulfite from sulfate: step 1/3. This chain is Sulfate adenylyltransferase (sat), found in Deinococcus radiodurans (strain ATCC 13939 / DSM 20539 / JCM 16871 / CCUG 27074 / LMG 4051 / NBRC 15346 / NCIMB 9279 / VKM B-1422 / R1).